A 300-amino-acid polypeptide reads, in one-letter code: Polyamine aminopropyltransferase (300 aa).

The region spanning 4–237 is the PABS domain; it reads WHWHIEWQTP…GLWGFVYASD (234 aa). Gln33 is a binding site for S-methyl-5'-thioadenosine. Residues His64 and Glu88 each coordinate spermidine. S-methyl-5'-thioadenosine-binding positions include Asp108 and 140–141; that span reads DG. Asp158 functions as the Proton acceptor in the catalytic mechanism. Position 167 (Pro167) interacts with S-methyl-5'-thioadenosine.

This sequence belongs to the spermidine/spermine synthase family. In terms of assembly, homodimer or homotetramer.

The protein resides in the cytoplasm. It carries out the reaction S-adenosyl 3-(methylsulfanyl)propylamine + putrescine = S-methyl-5'-thioadenosine + spermidine + H(+). Its pathway is amine and polyamine biosynthesis; spermidine biosynthesis; spermidine from putrescine: step 1/1. Functionally, catalyzes the irreversible transfer of a propylamine group from the amino donor S-adenosylmethioninamine (decarboxy-AdoMet) to putrescine (1,4-diaminobutane) to yield spermidine. The sequence is that of Polyamine aminopropyltransferase from Sulfurisphaera tokodaii (strain DSM 16993 / JCM 10545 / NBRC 100140 / 7) (Sulfolobus tokodaii).